The sequence spans 58 residues: uncharacterized protein (58 aa).

It is found in the plastid. Its subcellular location is the chloroplast. This is an uncharacterized protein from Chlamydomonas reinhardtii (Chlamydomonas smithii).